Reading from the N-terminus, the 78-residue chain is Acyl carrier protein (78 aa).

The region spanning 2–77 is the Carrier domain; the sequence is STIEERVKKI…AAIDYILSHQ (76 aa). Residue Ser-37 is modified to O-(pantetheine 4'-phosphoryl)serine.

The protein belongs to the acyl carrier protein (ACP) family. Post-translationally, 4'-phosphopantetheine is transferred from CoA to a specific serine of apo-ACP by AcpS. This modification is essential for activity because fatty acids are bound in thioester linkage to the sulfhydryl of the prosthetic group.

It is found in the cytoplasm. It participates in lipid metabolism; fatty acid biosynthesis. Functionally, carrier of the growing fatty acid chain in fatty acid biosynthesis. The sequence is that of Acyl carrier protein from Tolumonas auensis (strain DSM 9187 / NBRC 110442 / TA 4).